A 298-amino-acid polypeptide reads, in one-letter code: Trimeric intracellular cation channel type A (298 aa).

The Lumenal portion of the chain corresponds to 1–18 (MDLMSALSLGELALSFSR). Residues 19–39 (VPLFPVFDLSYFIVSIIYLKY) traverse the membrane as a helical segment. Residues 40-51 (EPGAVELSRRHP) lie on the Cytoplasmic side of the membrane. The helical transmembrane segment at 52 to 72 (VASWLCAMLHCFGSYILADLL) threads the bilayer. At 73–85 (LGEPIIDYFSNSS) the chain is on the lumenal side. Residue Gly-74 participates in Ca(2+) binding. A helical membrane pass occupies residues 86 to 106 (SILLASGVWYLIFFCPLDLFY). At 107-144 (KCVCFLPVKLIFVAMKEVVRVRKIAVGIHHAHHHYHHG) the chain is on the cytoplasmic side. Positions 122 and 126 each coordinate a 1,2-diacyl-sn-glycero-3-phospho-(1D-myo-inositol-4,5-bisphosphate). Residues 145–165 (WFIMIATGWVKGSGVALLSNV) form a helical membrane-spanning segment. The Lumenal portion of the chain corresponds to 166–178 (EQLLRGVWKPETN). The chain crosses the membrane as a helical span at residues 179–199 (EILHMSFPTKASLYGAILFTL). Over 200-209 (QQTRWLPVSK) the chain is Cytoplasmic. A helical membrane pass occupies residues 210–230 (ASLIFVFTMFMVSCKVFLTAT). Residues 231–234 (HSHS) are Lumenal-facing. Residues 235-255 (SPFDILEGYICPVLFGATWGG) form a helical membrane-spanning segment. The Cytoplasmic segment spans residues 256 to 298 (DHHHDNHGAPHGMGLGTQHSGLPAKAKEELGEGSRKKKTKKAD). The segment at 260–298 (DNHGAPHGMGLGTQHSGLPAKAKEELGEGSRKKKTKKAD) is disordered. Basic and acidic residues predominate over residues 280-289 (KAKEELGEGS).

Belongs to the TMEM38 family. As to quaternary structure, homotrimer; conformation seems to be controled by binding to diacylglycerol (DAG). Expressed at high levels in heart and striated muscle. Also detected in brain, lung and kidney.

The protein resides in the sarcoplasmic reticulum membrane. The protein localises to the nucleus membrane. It catalyses the reaction K(+)(in) = K(+)(out). Its activity is regulated as follows. Channel activity is activated by a change of voltage within the sarcoplasmic reticulum lumen and blocked by luminal high Ca(2+) levels. Functionally, intracellular monovalent cation channel required for maintenance of rapid intracellular calcium release. Acts as a potassium counter-ion channel that functions in synchronization with calcium release from intracellular stores. Opened by a change of voltage within the sarcoplasmic reticulum lumen. The protein is Trimeric intracellular cation channel type A (Tmem38a) of Mus musculus (Mouse).